The primary structure comprises 620 residues: MSFDIAKYPTLALVDSTQELRLLPKESLPKLCDELRRYLLDSVSRSSGHFASGLGTVELTVALHYVYNTPFDQLIWDVGHQAYPHKILTGRRDKIGTIRQKGGLHPFPWRGESEYDVLSVGHSSTSISAGIGIAVAAEKEGKNRRTVCVIGDGAITAGMAFEAMNHAGDIRPDMLVVLNDNEMSISENVGALNNHLAQLLSGKLYSSLREGGKKVFSGVPPIKELLKRTEEHIKGMVVPGTLFEELGFNYIGPVDGHDVLGLITTLKNMRDLKGPQFLHIMTKKGRGYEPAEKDPITFHAVPKFDPSSGCLPKSSGGLPSYSKIFGDWLCETAAKDNKLMAITPAMREGSGMVEFSRKFPDRYFDVAIAEQHAVTFAAGLAIGGYKPIVAIYSTFLQRAYDQVLHDVAIQKLPVLFAIDRAGIVGADGQTHQGAFDLSYLRCIPEMVIMTPSDENECRQMLYTGYHYNDGPSAVRYPRGNAVGVELTPLEKLPIGKGIVKRRGEKLAILNFGTLMPEAAKVAESLNATLVDMRFVKPLDEALILEMAASHEALVTVEENAIMGGAGSGVNEVLMAHRKPVPVLNIGLPDFFIPQGTQEEMRAELGLDAAGMEAKIKAWLA.

Thiamine diphosphate contacts are provided by residues histidine 80 and 121 to 123; that span reads GHS. Aspartate 152 contacts Mg(2+). Thiamine diphosphate contacts are provided by residues 153–154, asparagine 181, tyrosine 288, and glutamate 370; that span reads GA. Mg(2+) is bound at residue asparagine 181.

This sequence belongs to the transketolase family. DXPS subfamily. In terms of assembly, homodimer. It depends on Mg(2+) as a cofactor. Requires thiamine diphosphate as cofactor.

The enzyme catalyses D-glyceraldehyde 3-phosphate + pyruvate + H(+) = 1-deoxy-D-xylulose 5-phosphate + CO2. Its pathway is metabolic intermediate biosynthesis; 1-deoxy-D-xylulose 5-phosphate biosynthesis; 1-deoxy-D-xylulose 5-phosphate from D-glyceraldehyde 3-phosphate and pyruvate: step 1/1. Its function is as follows. Catalyzes the acyloin condensation reaction between C atoms 2 and 3 of pyruvate and glyceraldehyde 3-phosphate to yield 1-deoxy-D-xylulose-5-phosphate (DXP). The protein is 1-deoxy-D-xylulose-5-phosphate synthase of Shigella boydii serotype 18 (strain CDC 3083-94 / BS512).